The sequence spans 498 residues: Type II secretion system protein E (498 aa).

261–268 (GPTGSGKS) serves as a coordination point for ATP. Zn(2+) is bound by residues C394, C397, C425, and C428.

This sequence belongs to the GSP E family. In terms of assembly, forms homooligomers; most probably hexamers. Interacts with OutL/GspL. The cofactor is Zn(2+).

The protein resides in the cell inner membrane. The catalysed reaction is ATP + H2O + cellular proteinSide 1 = ADP + phosphate + cellular proteinSide 2.. Its function is as follows. ATPase component of the type II secretion system required for the energy-dependent secretion of extracellular factors such as proteases and toxins from the periplasm. Acts as a molecular motor to provide the energy that is required for assembly of the pseudopilus and the extrusion of substrates generated in the cytoplasm. This is Type II secretion system protein E (outE) from Pectobacterium carotovorum subsp. carotovorum (Erwinia carotovora subsp. carotovora).